We begin with the raw amino-acid sequence, 306 residues long: Pantothenate kinase (306 aa).

90–97 (GSVAVGKS) is an ATP binding site.

This sequence belongs to the prokaryotic pantothenate kinase family.

Its subcellular location is the cytoplasm. The enzyme catalyses (R)-pantothenate + ATP = (R)-4'-phosphopantothenate + ADP + H(+). The protein operates within cofactor biosynthesis; coenzyme A biosynthesis; CoA from (R)-pantothenate: step 1/5. In Listeria innocua serovar 6a (strain ATCC BAA-680 / CLIP 11262), this protein is Pantothenate kinase (coaA).